Reading from the N-terminus, the 613-residue chain is Chitin synthase 8 (613 aa).

The disordered stretch occupies residues 1-73; sequence MAVSPTAKRK…PAPLTRPPPP (73 aa). N-linked (GlcNAc...) asparagine glycosylation is present at N17. Positions 18–27 are enriched in polar residues; sequence LSRQSSSART. Residues 61-73 show a composition bias toward pro residues; sequence ESPPAPLTRPPPP. 2 consecutive transmembrane segments (helical) span residues 119-139 and 142-162; these read YSLILGFVSINAGFIWALWNY and YWYIFLPFLAANTFCQVIFAI. N312, N421, and N471 each carry an N-linked (GlcNAc...) asparagine glycan. A run of 2 helical transmembrane segments spans residues 556–576 and 583–602; these read VTTWWLGPFVVAAMFGFAIAL and IFENHIMIGLMSVLAFRYAA.

It belongs to the chitin synthase family.

The protein resides in the cell membrane. It catalyses the reaction [(1-&gt;4)-N-acetyl-beta-D-glucosaminyl](n) + UDP-N-acetyl-alpha-D-glucosamine = [(1-&gt;4)-N-acetyl-beta-D-glucosaminyl](n+1) + UDP + H(+). Its function is as follows. Polymerizes chitin, a structural polymer of the cell wall and septum, by transferring the sugar moiety of UDP-GlcNAc to the non-reducing end of the growing chitin polymer. Plays a role in cell wall integrity. Plays a key role in pathogenicity. Likely contributes to post-penetration virulence. This chain is Chitin synthase 8, found in Verticillium dahliae (strain VdLs.17 / ATCC MYA-4575 / FGSC 10137) (Verticillium wilt).